Here is a 489-residue protein sequence, read N- to C-terminus: Glutamyl-tRNA(Gln) amidotransferase subunit A (489 aa).

Catalysis depends on charge relay system residues lysine 77 and serine 157. The active-site Acyl-ester intermediate is serine 181.

The protein belongs to the amidase family. GatA subfamily. Heterotrimer of A, B and C subunits.

It catalyses the reaction L-glutamyl-tRNA(Gln) + L-glutamine + ATP + H2O = L-glutaminyl-tRNA(Gln) + L-glutamate + ADP + phosphate + H(+). In terms of biological role, allows the formation of correctly charged Gln-tRNA(Gln) through the transamidation of misacylated Glu-tRNA(Gln) in organisms which lack glutaminyl-tRNA synthetase. The reaction takes place in the presence of glutamine and ATP through an activated gamma-phospho-Glu-tRNA(Gln). The protein is Glutamyl-tRNA(Gln) amidotransferase subunit A of Caulobacter vibrioides (strain ATCC 19089 / CIP 103742 / CB 15) (Caulobacter crescentus).